A 238-amino-acid chain; its full sequence is Uridylate kinase (238 aa).

An ATP-binding site is contributed by 12-15; it reads KLSG. Gly-54 contacts UMP. Positions 55 and 59 each coordinate ATP. UMP contacts are provided by residues Asp-74 and 135–142; that span reads TGNPYFST. 2 residues coordinate ATP: Tyr-168 and Asp-171.

Belongs to the UMP kinase family. Homohexamer.

Its subcellular location is the cytoplasm. It catalyses the reaction UMP + ATP = UDP + ADP. Its pathway is pyrimidine metabolism; CTP biosynthesis via de novo pathway; UDP from UMP (UMPK route): step 1/1. With respect to regulation, inhibited by UTP. In terms of biological role, catalyzes the reversible phosphorylation of UMP to UDP. The chain is Uridylate kinase from Syntrophomonas wolfei subsp. wolfei (strain DSM 2245B / Goettingen).